The following is a 626-amino-acid chain: Transketolase-like protein 2 (626 aa).

His37 is a binding site for substrate. Residues Ser40, His77, and 123–125 contribute to the thiamine diphosphate site; that span reads GSL. Position 155 (Asp155) interacts with Mg(2+). Positions 156 and 185 each coordinate thiamine diphosphate. Residues Asn185 and Leu187 each contribute to the Mg(2+) site. Thiamine diphosphate-binding residues include Lys247 and His261. His261 and Ser348 together coordinate substrate. Thiamine diphosphate-binding residues include Glu369 and Phe395. The active-site Proton donor is Glu369. Positions 419 and 427 each coordinate substrate. Gln431 lines the thiamine diphosphate pocket. Residue Arg477 coordinates substrate.

This sequence belongs to the transketolase family. As to quaternary structure, homodimer. The cofactor is Mg(2+). Ca(2+) is required as a cofactor. It depends on Mn(2+) as a cofactor. Co(2+) serves as cofactor. Requires thiamine diphosphate as cofactor.

The enzyme catalyses D-sedoheptulose 7-phosphate + D-glyceraldehyde 3-phosphate = aldehydo-D-ribose 5-phosphate + D-xylulose 5-phosphate. Its function is as follows. Plays an essential role in total transketolase activity and cell proliferation in cancer cells; after transfection with anti-TKTL1 siRNA, total transketolase activity dramatically decreases and proliferation was significantly inhibited in cancer cells. Plays a pivotal role in carcinogenesis. The polypeptide is Transketolase-like protein 2 (TKTL2) (Bos taurus (Bovine)).